Consider the following 413-residue polypeptide: MATAMVLDPKPAEKLPATRPETSITDVPSDGEDDLYARLKSLQRQLEFIEIQEEYVKDELKNLRREHLRAQEEVKRIQSVPLVIGQFMEMIDQNNAIVGSTTGSNYYVRILSTINRELLKPSASVGLDRHSNALVDVLPPEADSSISLLSQSEKPDVTYNDIGGCDIQKQEIREAVELPLTHHELYKQIGIDPPRGVLLYGPPGTGKTMLAKAVAHHTTAAFIRVVGSEFVQKYLGEGPRMVRDVFRLAKENAPAIIFIDEVDAIATARFDAQTGADREVQRILMELLNQMDGFDQTVNVKVIMATNRADTLDPALLRPGRLDRKIEFPLPDRRQKRLVFQVCTAKMNLGDEVDLEDYVSRPDKISAAEITAICQEAGMHAVRKNRYVILPKDFEKGYRTNVKKPDTDFEFYK.

Residues 1 to 30 are disordered; the sequence is MATAMVLDPKPAEKLPATRPETSITDVPSD. A coiled-coil region spans residues 32-80; sequence EDDLYARLKSLQRQLEFIEIQEEYVKDELKNLRREHLRAQEEVKRIQSV. 201 to 208 is an ATP binding site; it reads GPPGTGKT.

The protein belongs to the AAA ATPase family.

The protein resides in the cytoplasm. The protein localises to the nucleus. The 26S proteasome is involved in the ATP-dependent degradation of ubiquitinated proteins. The regulatory (or ATPase) complex confers ATP dependency and substrate specificity to the 26S complex. The sequence is that of 26S proteasome regulatory subunit 6B homolog from Solanum tuberosum (Potato).